Here is a 584-residue protein sequence, read N- to C-terminus: Probable lysosomal cobalamin transporter (584 aa).

The next 10 membrane-spanning stretches (helical) occupy residues 8 to 28 (LIWIVYAIVVGILSIVASTFV), 46 to 66 (IFTLTALLATVLLLPVDVALV), 93 to 113 (TVVYYFLYSLDAVLCLLIVPF), 144 to 164 (TLVFILLTIILFLVGFFVPVA), 189 to 209 (ALTFALGLLIVMGIIVYVIYS), 313 to 333 (LLGGLLLLAISVMIWISMLLT), 350 to 370 (ILGKINIINPVNWVLVEAASV), 376 to 396 (VIFIVLVLHLFTSSVVGIATI), 421 to 441 (ATVMLTLITLALNYSISMIVV), and 509 to 529 (GIVDFWAQFVFLGFSLIVLLI).

The protein belongs to the LIMR family. LMBRD1 subfamily.

It is found in the lysosome membrane. Its function is as follows. Probable lysosomal cobalamin transporter. Required to export cobalamin from lysosomes allowing its conversion to cofactors. The sequence is that of Probable lysosomal cobalamin transporter from Coccidioides immitis (strain RS) (Valley fever fungus).